Reading from the N-terminus, the 385-residue chain is MQKSYLGIKLFGSKGNQKLFFEKVDALQKEINNFIFYLVIAGTETSQIQGISAAGIDSKARRRTALADAEFLLFGAYKDHKYKLPFLNSGVTPALISYVCKKLICASQIVVPIGIKEKPYFSHLTVENYLAGPAKCLTTGKSMNKERVLSLYKKGLEIGKSTKQPIFISESVPGGTTTAQAVMEAFGLNVNNLIGSSLINAPRALKTKVIKAGLLKANLKNNFDSLDVISSVGDPFQAFSLGLLIGARLAKQSVVLSGGSQMLAVILLALEFIDSTEKQEFIDLVFIATTGWLVKDNSLGDLLDLITEKHNVNLLGLASPLNFKSSKFKELSDYEIGYVKEGVGAGGMSILAFLKGFSNEEIVSSCQVNLERMKDLGQISINKDC.

The protein belongs to the UPF0284 family.

This chain is UPF0284 protein PMM0439, found in Prochlorococcus marinus subsp. pastoris (strain CCMP1986 / NIES-2087 / MED4).